The chain runs to 268 residues: UPF0328 protein ECU03_0040 (268 aa).

It belongs to the UPF0328 family.

The chain is UPF0328 protein ECU03_0040 from Encephalitozoon cuniculi (strain GB-M1) (Microsporidian parasite).